The chain runs to 397 residues: Acetylornithine aminotransferase (397 aa).

Phenylalanine 129 contributes to the pyridoxal 5'-phosphate binding site. Arginine 132 is a binding site for N(2)-acetyl-L-ornithine. Position 214–217 (214–217 (DEVQ)) interacts with pyridoxal 5'-phosphate. Lysine 243 bears the N6-(pyridoxal phosphate)lysine mark. Residue serine 271 participates in N(2)-acetyl-L-ornithine binding. Threonine 272 contacts pyridoxal 5'-phosphate.

The protein belongs to the class-III pyridoxal-phosphate-dependent aminotransferase family. ArgD subfamily. Homodimer. Requires pyridoxal 5'-phosphate as cofactor.

The protein resides in the cytoplasm. The catalysed reaction is N(2)-acetyl-L-ornithine + 2-oxoglutarate = N-acetyl-L-glutamate 5-semialdehyde + L-glutamate. It participates in amino-acid biosynthesis; L-arginine biosynthesis; N(2)-acetyl-L-ornithine from L-glutamate: step 4/4. The protein is Acetylornithine aminotransferase of Neisseria meningitidis serogroup A / serotype 4A (strain DSM 15465 / Z2491).